The primary structure comprises 152 residues: 3-hydroxyacyl-[acyl-carrier-protein] dehydratase FabZ (152 aa).

H54 is a catalytic residue.

Belongs to the thioester dehydratase family. FabZ subfamily.

The protein resides in the cytoplasm. The catalysed reaction is a (3R)-hydroxyacyl-[ACP] = a (2E)-enoyl-[ACP] + H2O. Involved in unsaturated fatty acids biosynthesis. Catalyzes the dehydration of short chain beta-hydroxyacyl-ACPs and long chain saturated and unsaturated beta-hydroxyacyl-ACPs. This Roseobacter denitrificans (strain ATCC 33942 / OCh 114) (Erythrobacter sp. (strain OCh 114)) protein is 3-hydroxyacyl-[acyl-carrier-protein] dehydratase FabZ.